The sequence spans 364 residues: 3-dehydroquinate synthase (364 aa).

Residues 105 to 109 (GVVGD), 129 to 130 (TT), Lys142, and Lys151 each bind NAD(+). Zn(2+) contacts are provided by Glu184, His247, and His264.

The protein belongs to the sugar phosphate cyclases superfamily. Dehydroquinate synthase family. Requires Co(2+) as cofactor. It depends on Zn(2+) as a cofactor. NAD(+) serves as cofactor.

Its subcellular location is the cytoplasm. It catalyses the reaction 7-phospho-2-dehydro-3-deoxy-D-arabino-heptonate = 3-dehydroquinate + phosphate. The protein operates within metabolic intermediate biosynthesis; chorismate biosynthesis; chorismate from D-erythrose 4-phosphate and phosphoenolpyruvate: step 2/7. In terms of biological role, catalyzes the conversion of 3-deoxy-D-arabino-heptulosonate 7-phosphate (DAHP) to dehydroquinate (DHQ). This is 3-dehydroquinate synthase from Acidithiobacillus ferrooxidans (strain ATCC 23270 / DSM 14882 / CIP 104768 / NCIMB 8455) (Ferrobacillus ferrooxidans (strain ATCC 23270)).